Reading from the N-terminus, the 1056-residue chain is MISDDDDLPSTRPGSVNEELPETEPEDNDELPETEPESDSDKPTVTSNKTENQVADEDYDSFDDFVPSQTHTASKIPVKNKRAKKCTVESDSSSSDDSDQGDDCEFIPACDETQEVPKIKRGYTLRTRASVKNKCDDSWDDGIDEEDVSKRSEDTLNDSFVDPEFMDSVLDNQLTIKGKKQFLDDGEFFTDRNVPQIDEATKMKWASMTSPPQEALNALNEFFGHKGFREKQWDVVRNVLGGKDQFVLMSTGYGKSVCYQLPSLLLNSMTVVVSPLISLMNDQVTTLVSKGIDAVKLDGHSTQIEWDQVANNMHRIRFIYMSPEMVTSQKGLELLTSCRKHISLLAIDEAHCVSQWGHDFRNSYRHLAEIRNRSDLCNIPMIALTATATVRVRDDVIANLRLRKPLITTTSFDRKNLYISVHSSKDMAEDLGLFMKTDEVKGRHFGGPTIIYCQTKQMVDDVNCVLRRIGVRSAHYHAGLTKNQREKAHTDFMRDKITTIVATVAFGMGIDKPDVRNVIHYGCPNNIESYYQEIGRAGRDGSPSICRVFWAPKDLNTIKFKLRNSQQKEEVVENLTMMLRQLELVLTTVGCRRYQLLKHFDPSYAKPPTMQADCCDRCTEMLNGNQDSSSSIVDVTTESKWLFQVINEMYNGKTGIGKPIEFLRGSSKEDWRIKTTSQQKLFGIGKHIPDKWWKALAASLRIAGYLGEVRLMQMKFGSCITLSELGERWLLTGKEMKIDATPILLQGKKEKAAPSTVPGASRSQSTKSSTEIPTKILGANKIREYEPANENEQLMNLKKQEVTGLPEKIDQLRSRLDDIRVGIANMHEVAPFQIVSNTVLDCFANLRPTSASNLEMIDGMSAQQKSRYGKRFVDCVVQFSKETGIATNVNANDMIPPELISKMQKVLSDAVRRVYTEHLISRSTAKEVATARGISEGTVYSYLAMAVEKGLPLHLDKLNVSRKNIAMALNAVRVHLGSNVAVLTPWVEAMGVVPDFNQLKLIRAILIYEYGLDTSENQEKPDIQSMPSTSNPSTIKTVPSTPSSSLRAPPLKKFKL.

Positions 1–102 are disordered; the sequence is MISDDDDLPS…SSSDDSDQGD (102 aa). 2 repeat units span residues 17–26 and 28–37. The interval 17 to 37 is 2 X 10 AA repeats of N-[ED]-E-L-P-E-T-E-P-E; that stretch reads NEELPETEPEDNDELPETEPE. Acidic residues predominate over residues 19-38; that stretch reads ELPETEPEDNDELPETEPES. Residues 43–53 are compositionally biased toward polar residues; it reads PTVTSNKTENQ. Positions 54 to 63 are enriched in acidic residues; it reads VADEDYDSFD. A Helicase ATP-binding domain is found at 236–406; it reads VRNVLGGKDQ…IANLRLRKPL (171 aa). An ATP-binding site is contributed by 249-256; the sequence is MSTGYGKS. A DEAH box motif is present at residues 348–351; sequence DEAH. In terms of domain architecture, Helicase C-terminal spans 427–583; that stretch reads MAEDLGLFMK…NLTMMLRQLE (157 aa). 4 residues coordinate Zn(2+): cysteine 591, cysteine 614, cysteine 615, and cysteine 618. The interval 749 to 771 is disordered; the sequence is KEKAAPSTVPGASRSQSTKSSTE. The span at 761–771 shows a compositional bias: polar residues; it reads SRSQSTKSSTE. Residues 806-886 enclose the HRDC domain; the sequence is PEKIDQLRSR…VQFSKETGIA (81 aa). The segment at 1018-1056 is disordered; it reads QEKPDIQSMPSTSNPSTIKTVPSTPSSSLRAPPLKKFKL. A compositionally biased stretch (polar residues) spans 1025–1046; sequence SMPSTSNPSTIKTVPSTPSSSL.

This sequence belongs to the helicase family. RecQ subfamily. Zn(2+) is required as a cofactor.

The protein localises to the nucleus. The catalysed reaction is Couples ATP hydrolysis with the unwinding of duplex DNA by translocating in the 3'-5' direction.. It carries out the reaction ATP + H2O = ADP + phosphate + H(+). Essential for the formation of DNA replication focal centers; stably associates with foci elements generating binding sites for RP-A. Exhibits a magnesium-dependent ATP-dependent 3'-5' DNA-helicase activity. May be involved in the control of genomic stability. In Caenorhabditis elegans, this protein is ATP-dependent helicase wrn-1 (wrn-1).